The sequence spans 137 residues: Putative pre-16S rRNA nuclease (137 aa).

The protein belongs to the YqgF nuclease family.

The protein localises to the cytoplasm. In terms of biological role, could be a nuclease involved in processing of the 5'-end of pre-16S rRNA. In Buchnera aphidicola subsp. Schizaphis graminum (strain Sg), this protein is Putative pre-16S rRNA nuclease.